Consider the following 305-residue polypeptide: Thyroxine 5-deiodinase (305 aa).

The Cytoplasmic portion of the chain corresponds to 1-43 (MPGQAGRRRLVGGGCRGSQGPLGGAATMLRSLLLHSLRLCAQT). Residues 44 to 63 (ASCLVLFPRFLGTACMLWLL) form a helical; Signal-anchor for type II membrane protein membrane-spanning segment. The Extracellular portion of the chain corresponds to 64 to 305 (DFLCIRKHLL…QLHGPQPRRV (242 aa)). The disordered stretch occupies residues 79-98 (GEPETEVELNSDGDEVPPDD). The span at 82–96 (ETEVELNSDGDEVPP) shows a compositional bias: acidic residues. The active site involves selenocysteine 171. Selenocysteine 171 is a non-standard amino acid (selenocysteine).

It belongs to the iodothyronine deiodinase family. In terms of assembly, monomer. Homodimer. May undergo minor heretodimerization with DIO1 and DIO2. As to expression, expressed in brain only.

The protein resides in the cell membrane. The protein localises to the endosome membrane. The catalysed reaction is 3,3',5'-triiodo-L-thyronine + iodide + A + H(+) = L-thyroxine + AH2. It carries out the reaction 3,3'-diiodo-L-thyronine + iodide + A + H(+) = 3,3',5-triiodo-L-thyronine + AH2. The enzyme catalyses 3-iodo-L-thyronine + iodide + A + H(+) = 3,5-diiodo-L-thyronine + AH2. It catalyses the reaction L-thyronine + iodide + A + H(+) = 3-iodo-L-thyronine + AH2. The catalysed reaction is 3',5'-diiodo-L-thyronine + iodide + A + H(+) = 3,3',5'-triiodo-L-thyronine + AH2. It carries out the reaction 3'-iodo-L-thyronine + iodide + A + H(+) = 3,3'-diiodo-L-thyronine + AH2. The enzyme catalyses 3,3',5'-triiodothyronamine + iodide + A + H(+) = 3,3',5,5'-tetraiodothyronamine + AH2. It catalyses the reaction 3',5'-diiodothyronamine + iodide + A + H(+) = 3,3',5'-triiodothyronamine + AH2. The catalysed reaction is 3,3'-diiodothyronamine + iodide + A + H(+) = 3,3',5-triiodothyronamine + AH2. It carries out the reaction 3-iodothyronamine + iodide + A + H(+) = 3,5-diiodothyronamine + AH2. The enzyme catalyses 3'-iodothyronamine + iodide + A + H(+) = 3,3'-diiodothyronamine + AH2. It catalyses the reaction thyronamine + iodide + A + H(+) = 3-iodothyronamine + AH2. Functionally, plays a crucial role in the metabolism of thyroid hormones (TH) and has specific roles in TH activation and inactivation by deiodination, particularly in different tissues. Catalyzes the deiodination of L-thyroxine (T4) to 3,3',5'-triiodothyronine (rT3), 3,5-diiodothyronine (3,5-T2) to 3-monoiodothyronine (3-T1), rT3 to 3',5'-diiodothyronine (3',5'-T2) and 3,3'-diiodothyronine (3,3'-T2) to 3'-monoiodothyronine (3'-T1) via inner-ring deiodination (IRD). Catalyzes the deiodination of 3,5,3'-triiodothyronine (T3) to 3,3'-diiodothyronine (3,3'-T2) via IRD. Catalyzes the deiodination of 3-T1 to L-thyronine (T0) via outer-ring deiodination (ORD). Catalyzes the tyrosyl ring deiodinations of 3,3',5,5'-tetraiodothyronamine, 3,3',5'-triiodothyronamine, 3,5,3'-triiodothyronamine, 3,5-diiodothyronamine, 3,3'-diiodothyronamine and 3-iodothyronamine. This chain is Thyroxine 5-deiodinase (DIO3), found in Sus scrofa (Pig).